The sequence spans 93 residues: DNA-directed RNA polymerase subunit Rpo11 (93 aa).

Belongs to the archaeal Rpo11/eukaryotic RPB11/RPC19 RNA polymerase subunit family. In terms of assembly, part of the RNA polymerase complex.

The protein localises to the cytoplasm. The enzyme catalyses RNA(n) + a ribonucleoside 5'-triphosphate = RNA(n+1) + diphosphate. In terms of biological role, DNA-dependent RNA polymerase (RNAP) catalyzes the transcription of DNA into RNA using the four ribonucleoside triphosphates as substrates. In Sulfurisphaera tokodaii (strain DSM 16993 / JCM 10545 / NBRC 100140 / 7) (Sulfolobus tokodaii), this protein is DNA-directed RNA polymerase subunit Rpo11.